The sequence spans 39 residues: Photosystem II reaction center protein J (39 aa).

The helical transmembrane segment at Ile7 to Phe27 threads the bilayer.

It belongs to the PsbJ family. PSII is composed of 1 copy each of membrane proteins PsbA, PsbB, PsbC, PsbD, PsbE, PsbF, PsbH, PsbI, PsbJ, PsbK, PsbL, PsbM, PsbT, PsbX, PsbY, PsbZ, Psb30/Ycf12, peripheral proteins PsbO, CyanoQ (PsbQ), PsbU, PsbV and a large number of cofactors. It forms dimeric complexes.

The protein resides in the cellular thylakoid membrane. Functionally, one of the components of the core complex of photosystem II (PSII). PSII is a light-driven water:plastoquinone oxidoreductase that uses light energy to abstract electrons from H(2)O, generating O(2) and a proton gradient subsequently used for ATP formation. It consists of a core antenna complex that captures photons, and an electron transfer chain that converts photonic excitation into a charge separation. This is Photosystem II reaction center protein J from Synechococcus sp. (strain JA-2-3B'a(2-13)) (Cyanobacteria bacterium Yellowstone B-Prime).